Here is a 115-residue protein sequence, read N- to C-terminus: Phosphoribosyl-AMP cyclohydrolase (115 aa).

D80 provides a ligand contact to Mg(2+). C81 serves as a coordination point for Zn(2+). Mg(2+) contacts are provided by D82 and D84. Zn(2+) contacts are provided by C97 and C104.

Belongs to the PRA-CH family. As to quaternary structure, homodimer. Requires Mg(2+) as cofactor. It depends on Zn(2+) as a cofactor.

Its subcellular location is the cytoplasm. It carries out the reaction 1-(5-phospho-beta-D-ribosyl)-5'-AMP + H2O = 1-(5-phospho-beta-D-ribosyl)-5-[(5-phospho-beta-D-ribosylamino)methylideneamino]imidazole-4-carboxamide. It participates in amino-acid biosynthesis; L-histidine biosynthesis; L-histidine from 5-phospho-alpha-D-ribose 1-diphosphate: step 3/9. Its function is as follows. Catalyzes the hydrolysis of the adenine ring of phosphoribosyl-AMP. The protein is Phosphoribosyl-AMP cyclohydrolase of Mycolicibacterium smegmatis (strain ATCC 700084 / mc(2)155) (Mycobacterium smegmatis).